The primary structure comprises 150 residues: Glycophorin-A (150 aa).

The signal sequence occupies residues 1–19; it reads MYGKIIFVLLLSEIVSISA. Topologically, residues 20–91 are extracellular; that stretch reads LSTTEVAMHT…QLAHHFSEPE (72 aa). S21 carries O-linked (GalNAc...) serine glycosylation. O-linked (GalNAc...) threonine glycans are attached at residues T22, T23, and T29. O-linked (GalNAc...) serine glycosylation occurs at S30. Residue T31 is glycosylated (O-linked (GalNAc...) threonine). An O-linked (GalNAc...) serine glycan is attached at S32. A glycan (O-linked (GalNAc...) threonine) is linked at T36. O-linked (GalNAc...) serine glycans are attached at residues S38 and S41. The O-linked (GalNAc...) threonine glycan is linked to T44. N45 carries N-linked (GlcNAc...) asparagine glycosylation. 2 O-linked (GalNAc...) threonine glycosylation sites follow: T52 and T56. O-linked (GalNAc...) serine glycans are attached at residues S63 and S66. T69 is a glycosylation site (O-linked (GalNAc...) threonine). Residues 92-114 traverse the membrane as a helical segment; sequence ITLIIFGVMAGVIGTILLISYGI. The Cytoplasmic segment spans residues 115–150; that stretch reads RRLIKKSPSDVKPLPSPDTDVPLSSVEIENPETSDQ. Residues 121-150 form a disordered region; that stretch reads SPSDVKPLPSPDTDVPLSSVEIENPETSDQ. Phosphothreonine is present on T133. Phosphoserine is present on residues S138 and S148.

The protein belongs to the glycophorin A family. In terms of assembly, homodimer. Component of the ankyrin-1 complex in the erythrocyte, composed of ANK1, RHCE, RHAG, SLC4A1, EPB42, GYPA, GYPB and AQP1. Interacts with SLC4A1; a GYPA monomer is bound at each end of the SLC4A1 dimer forming a heterotetramer. (Microbial infection) Interacts with Streptococcus gordonii hsa protein. As to quaternary structure, (Microbial infection) Interacts (in a sialic acid-independent manner) with P.falciparum MSP1 subunit p83. In terms of processing, the major O-linked glycan are NeuAc-alpha-(2-3)-Gal-beta-(1-3)-[NeuAc-alpha-(2-6)]-GalNAcOH (about 78 %) and NeuAc-alpha-(2-3)-Gal-beta-(1-3)-GalNAcOH (17 %). Minor O-glycans (5 %) include NeuAc-alpha-(2-3)-Gal-beta-(1-3)-[NeuAc-alpha-(2-6)]-GalNAcOH NeuAc-alpha-(2-8)-NeuAc-alpha-(2-3)-Gal-beta-(1-3)-GalNAcOH. About 1% of all O-linked glycans carry blood group A, B and H determinants. They derive from a type-2 precursor core structure, Gal-beta-(1,3)-GlcNAc-beta-1-R, and the antigens are synthesized by addition of fucose (H antigen-specific) and then N-acetylgalactosamine (A antigen-specific) or galactose (B antigen-specific). Specifically O-linked-glycans are NeuAc-alpha-(2-3)-Gal-beta-(1-3)-GalNAcOH-(6-1)-GlcNAc-beta-(4-1)-[Fuc-alpha-(1-2)]-Gal-beta-(3-1)-GalNAc-alpha (about 1%, B antigen-specific) and NeuAc-alpha-(2-3)-Gal-beta-(1-3)-GalNAcOH-(6-1)-GlcNAc-beta-(4-1)-[Fuc-alpha-(1-2)]-Gal-beta (1 %, O antigen-, A antigen- and B antigen-specific).

The protein resides in the cell membrane. Component of the ankyrin-1 complex, a multiprotein complex involved in the stability and shape of the erythrocyte membrane. Glycophorin A is the major intrinsic membrane protein of the erythrocyte. The N-terminal glycosylated segment, which lies outside the erythrocyte membrane, has MN blood group receptors. Appears to be important for the function of SLC4A1 and is required for high activity of SLC4A1. May be involved in translocation of SLC4A1 to the plasma membrane. Its function is as follows. (Microbial infection) Appears to be a receptor for Hepatitis A virus (HAV). Functionally, (Microbial infection) Receptor for P.falciparum erythrocyte-binding antigen 175 (EBA-175); binding of EBA-175 is dependent on sialic acid residues of the O-linked glycans. The chain is Glycophorin-A from Homo sapiens (Human).